Consider the following 188-residue polypeptide: MSATETKYVPRLYKKYKEEVVPKLIQKFQYKNPMQVPRLVKIVVNMGVGEAVQDIKQLERAVEDLRAITGQQPMITRARKSKAGFKLRKGMPIGCKVTLRNHTMWDFLDKVISVALPRVKDFKGLNPRSFDGRGNYAFGIAEQIVFPEIDYDKVDRIRGMDIIINTTAVSDQESLLATLTLGLPIRAM.

The protein belongs to the universal ribosomal protein uL5 family. Part of the 50S ribosomal subunit; part of the 5S rRNA/L5/L18/L25 subcomplex. Contacts the 5S rRNA and the P site tRNA. Forms a bridge to the 30S subunit in the 70S ribosome.

Its function is as follows. This is one of the proteins that bind and probably mediate the attachment of the 5S RNA into the large ribosomal subunit, where it forms part of the central protuberance. In the 70S ribosome it contacts protein S13 of the 30S subunit (bridge B1b), connecting the 2 subunits; this bridge is implicated in subunit movement. Contacts the P site tRNA; the 5S rRNA and some of its associated proteins might help stabilize positioning of ribosome-bound tRNAs. The sequence is that of Large ribosomal subunit protein uL5 from Aquifex pyrophilus.